The following is a 98-amino-acid chain: Prolactin-releasing peptide (98 aa).

An N-terminal signal peptide occupies residues 1 to 22 (MKAVGAWLLCLLLLGLALQGAA). Disordered regions lie at residues 52-71 (RFGRRRAAPGDGPRPGPRRV) and 79-98 (GGAEPSRALPGRLTAQLVQE). Position 53 is a phenylalanine amide (phenylalanine 53). The propeptide occupies 58–98 (AAPGDGPRPGPRRVPACFRLEGGAEPSRALPGRLTAQLVQE).

In terms of processing, amidation of C-terminus is required for receptor interaction. In terms of tissue distribution, medulla oblongata and hypothalamus.

The protein resides in the secreted. In terms of biological role, stimulates prolactin (PRL) release and regulates the expression of prolactin through its receptor GPR10. May stimulate lactotrophs directly to secrete PRL. This chain is Prolactin-releasing peptide (PRLH), found in Bos taurus (Bovine).